The following is a 425-amino-acid chain: Glutamate-1-semialdehyde 2,1-aminomutase (425 aa).

An N6-(pyridoxal phosphate)lysine modification is found at lysine 264.

It belongs to the class-III pyridoxal-phosphate-dependent aminotransferase family. HemL subfamily. In terms of assembly, homodimer. Pyridoxal 5'-phosphate is required as a cofactor.

The protein localises to the cytoplasm. The enzyme catalyses (S)-4-amino-5-oxopentanoate = 5-aminolevulinate. Its pathway is porphyrin-containing compound metabolism; protoporphyrin-IX biosynthesis; 5-aminolevulinate from L-glutamyl-tRNA(Glu): step 2/2. The polypeptide is Glutamate-1-semialdehyde 2,1-aminomutase (Leptospira biflexa serovar Patoc (strain Patoc 1 / Ames)).